The primary structure comprises 367 residues: Cystinosin (367 aa).

The first 22 residues, methionine 1–serine 22, serve as a signal peptide directing secretion. The Lumenal segment spans residues threonine 23–isoleucine 125. Residues asparagine 51, asparagine 66, asparagine 84, asparagine 104, and asparagine 107 are each glycosylated (N-linked (GlcNAc...) asparagine). In terms of domain architecture, PQ-loop 1 spans valine 123–glutamine 189. Residues isoleucine 126–tryptophan 150 traverse the membrane as a helical segment. Topologically, residues arginine 151 to serine 159 are cytoplasmic. The chain crosses the membrane as a helical span at residues phenylalanine 160–glycine 179. Position 166 (asparagine 166) interacts with L-cystine. At leucine 180–aspartate 202 the chain is on the lumenal side. The helical transmembrane segment at serine 203 to leucine 225 threads the bilayer. Aspartate 205 provides a ligand contact to H(+). Topologically, residues tyrosine 226–serine 234 are cytoplasmic. The chain crosses the membrane as a helical span at residues tryptophan 235–valine 257. The Lumenal segment spans residues glycine 258–leucine 263. The PQ-loop 2 domain maps to leucine 263 to leucine 328. A helical membrane pass occupies residues glutamine 264–phenylalanine 289. L-cystine is bound by residues lysine 273, lysine 280, and tyrosine 281. At histidine 290 to serine 298 the chain is on the cytoplasmic side. The chain crosses the membrane as a helical span at residues isoleucine 299–glycine 308. Residues asparagine 301 and aspartate 305 each coordinate L-cystine. A H(+)-binding site is contributed by aspartate 305. Residues glycine 309–glycine 331 are Lumenal-facing. A helical membrane pass occupies residues aspartate 332–phenylalanine 354. Aspartate 346 lines the H(+) pocket. At cysteine 355 to asparagine 367 the chain is on the cytoplasmic side. Positions glycine 362 to leucine 366 match the Lysosomal targeting motif motif.

Belongs to the cystinosin family. Interacts with components of the V-ATPase complex. Interacts with components of the Ragulator complex. Interacts with RRAGA/RagA and RRAGC/RagC. Interacts with AP-3 complex subunit mu (AP3M1 or AP3M2).

The protein resides in the lysosome membrane. It localises to the melanosome membrane. The catalysed reaction is L-cystine(out) + H(+)(out) = L-cystine(in) + H(+)(in). With respect to regulation, switches between a lumen- and a cytosol-open conformation: pH induces conformational changes and shifts the equilibrium to facilitate the transition between the lumen- and cytosol-open conformation, thereby promoting cystine transport. Protonation of specific aspartate residues (Asp-205, Asp-305 and Asp-346) favors the cytosol-open conformation. In terms of biological role, cystine/H(+) symporter that mediates export of cystine, the oxidized dimer of cysteine, from lysosomes. Plays an important role in melanin synthesis by catalyzing cystine export from melanosomes, possibly by inhibiting pheomelanin synthesis. In addition to cystine export, also acts as a positive regulator of mTORC1 signaling in kidney proximal tubular cells, via interactions with components of the v-ATPase and Ragulator complexes. Also involved in small GTPase-regulated vesicle trafficking and lysosomal localization of LAMP2A, independently of cystine transporter activity. The chain is Cystinosin from Bos taurus (Bovine).